The following is a 213-amino-acid chain: High frequency lysogenization protein HflD homolog (213 aa).

Positions 79–122 (QGLNAELTRYTLSLMVLERKLSSAKGALNTLGDRINGLQRQLDH) form a coiled coil.

Belongs to the HflD family.

Its subcellular location is the cytoplasm. It is found in the cell inner membrane. The chain is High frequency lysogenization protein HflD homolog from Salmonella dublin (strain CT_02021853).